The primary structure comprises 216 residues: MDFDEKRRILAERLRDELNLSEKVYNAIKKVPRHLFVPERYRTMAYVDTPLPIGYGQTISAPHMVAIMCELLDLREGERVLEIGTGCGYHAAVTAEIVGKRGLVVSVERIPELAEIAKRNLSALGYENVVVIVGDGSLGYEPMAPYDKIYVTASAPDIPKPLLEQLKIGGKMVIPIGETTQFLYVVERDNGVRKWSWGAVRFVPLYGKYGFRPLEE.

Residue Ser60 is part of the active site.

This sequence belongs to the methyltransferase superfamily. L-isoaspartyl/D-aspartyl protein methyltransferase family.

The protein localises to the cytoplasm. The enzyme catalyses [protein]-L-isoaspartate + S-adenosyl-L-methionine = [protein]-L-isoaspartate alpha-methyl ester + S-adenosyl-L-homocysteine. In terms of biological role, catalyzes the methyl esterification of L-isoaspartyl residues in peptides and proteins that result from spontaneous decomposition of normal L-aspartyl and L-asparaginyl residues. It plays a role in the repair and/or degradation of damaged proteins. This Archaeoglobus fulgidus (strain ATCC 49558 / DSM 4304 / JCM 9628 / NBRC 100126 / VC-16) protein is Protein-L-isoaspartate O-methyltransferase 1 (pcm1).